The following is a 169-amino-acid chain: Putative ribonuclease VapC50 (169 aa).

Toxic component of a type II toxin-antitoxin (TA) system. An RNase. The cognate antitoxin is VapB50. This chain is Putative ribonuclease VapC50, found in Mycobacterium tuberculosis (strain ATCC 25618 / H37Rv).